The sequence spans 285 residues: Bifunctional protein FolD (285 aa).

NADP(+) contacts are provided by residues 165–167 and Ser-190; that span reads GRS.

It belongs to the tetrahydrofolate dehydrogenase/cyclohydrolase family. In terms of assembly, homodimer.

The catalysed reaction is (6R)-5,10-methylene-5,6,7,8-tetrahydrofolate + NADP(+) = (6R)-5,10-methenyltetrahydrofolate + NADPH. It catalyses the reaction (6R)-5,10-methenyltetrahydrofolate + H2O = (6R)-10-formyltetrahydrofolate + H(+). Its pathway is one-carbon metabolism; tetrahydrofolate interconversion. In terms of biological role, catalyzes the oxidation of 5,10-methylenetetrahydrofolate to 5,10-methenyltetrahydrofolate and then the hydrolysis of 5,10-methenyltetrahydrofolate to 10-formyltetrahydrofolate. This Staphylococcus saprophyticus subsp. saprophyticus (strain ATCC 15305 / DSM 20229 / NCIMB 8711 / NCTC 7292 / S-41) protein is Bifunctional protein FolD.